A 441-amino-acid polypeptide reads, in one-letter code: Arginine biosynthesis bifunctional protein ArgJ, mitochondrial (441 aa).

Substrate is bound by residues Thr177, Lys204, Thr215, Glu301, Asn436, and Ser441. Catalysis depends on Thr215, which acts as the Nucleophile.

The protein belongs to the ArgJ family. As to quaternary structure, heterodimer of an alpha and a beta chain. Post-translationally, the alpha and beta chains are autoproteolytically processed from a single precursor protein within the mitochondrion.

Its subcellular location is the mitochondrion matrix. It carries out the reaction N(2)-acetyl-L-ornithine + L-glutamate = N-acetyl-L-glutamate + L-ornithine. It catalyses the reaction L-glutamate + acetyl-CoA = N-acetyl-L-glutamate + CoA + H(+). It participates in amino-acid biosynthesis; L-arginine biosynthesis; L-ornithine and N-acetyl-L-glutamate from L-glutamate and N(2)-acetyl-L-ornithine (cyclic): step 1/1. Its pathway is amino-acid biosynthesis; L-arginine biosynthesis; N(2)-acetyl-L-ornithine from L-glutamate: step 1/4. Its function is as follows. Catalyzes two activities which are involved in the cyclic version of arginine biosynthesis: the synthesis of acetylglutamate from glutamate and acetyl-CoA, and of ornithine by transacetylation between acetylornithine and glutamate. This Kluyveromyces lactis (strain ATCC 8585 / CBS 2359 / DSM 70799 / NBRC 1267 / NRRL Y-1140 / WM37) (Yeast) protein is Arginine biosynthesis bifunctional protein ArgJ, mitochondrial.